The following is a 172-amino-acid chain: Adenine phosphoribosyltransferase (172 aa).

It belongs to the purine/pyrimidine phosphoribosyltransferase family. As to quaternary structure, homodimer.

It is found in the cytoplasm. The enzyme catalyses AMP + diphosphate = 5-phospho-alpha-D-ribose 1-diphosphate + adenine. It functions in the pathway purine metabolism; AMP biosynthesis via salvage pathway; AMP from adenine: step 1/1. Its function is as follows. Catalyzes a salvage reaction resulting in the formation of AMP, that is energically less costly than de novo synthesis. This Parasynechococcus marenigrum (strain WH8102) protein is Adenine phosphoribosyltransferase.